Here is a 118-residue protein sequence, read N- to C-terminus: Beta-2-microglobulin (118 aa).

A signal peptide spans 1-21 (MGSRWGIAVLGLFCFVSCLEA). The Ig-like C1-type domain occupies 26-113 (PKIQVYSRHP…VHEGVKKTVK (88 aa)). Residues cysteine 46 and cysteine 101 are joined by a disulfide bond.

This sequence belongs to the beta-2-microglobulin family. As to quaternary structure, heterodimer of an alpha chain and a beta chain. Beta-2-microglobulin is the beta-chain of major histocompatibility complex class I molecules.

Its subcellular location is the secreted. Its function is as follows. Component of the class I major histocompatibility complex (MHC). Involved in the presentation of peptide antigens to the immune system. The protein is Beta-2-microglobulin (B2M) of Ornithorhynchus anatinus (Duckbill platypus).